The chain runs to 227 residues: Lipoprotein-releasing system ATP-binding protein LolD (227 aa).

Residues 8-226 (IEVTNLCKSF…VVHMADGRIT (219 aa)) enclose the ABC transporter domain. 44-51 (GASGAGKT) provides a ligand contact to ATP.

It belongs to the ABC transporter superfamily. Lipoprotein translocase (TC 3.A.1.125) family. The complex is composed of two ATP-binding proteins (LolD) and two transmembrane proteins (LolC and LolE).

It localises to the cell inner membrane. In terms of biological role, part of the ABC transporter complex LolCDE involved in the translocation of mature outer membrane-directed lipoproteins, from the inner membrane to the periplasmic chaperone, LolA. Responsible for the formation of the LolA-lipoprotein complex in an ATP-dependent manner. This chain is Lipoprotein-releasing system ATP-binding protein LolD, found in Syntrophotalea carbinolica (strain DSM 2380 / NBRC 103641 / GraBd1) (Pelobacter carbinolicus).